Reading from the N-terminus, the 620-residue chain is Long-chain fatty acid transport protein 2 (620 aa).

Residues 1-4 (MLSA) lie on the Lumenal side of the membrane. Residues 5 to 27 (IYTVLAGLLFLPLLVNLCCPYFF) traverse the membrane as a helical segment. The Cytoplasmic portion of the chain corresponds to 28 to 106 (QDIGYFLKVA…DHLGLRQGDC (79 aa)). The helical transmembrane segment at 107–127 (VALLMGNEPAYVWLWLGLVKL) threads the bilayer. The Lumenal segment spans residues 128 to 261 (GCAMACLNYN…SGLKADDVIY (134 aa)). AMP is bound at residue 222-233 (YIYTSGTTGLPK). Residues 262 to 282 (ITLPFYHSAALLIGIHGCIVA) form a helical membrane-spanning segment. Over 283–620 (GATLALRTKF…NAISAKTLKL (338 aa)) the chain is Cytoplasmic. Lys-291 carries the N6-acetyllysine modification. Thr-577 is modified (phosphothreonine).

The protein belongs to the ATP-dependent AMP-binding enzyme family. In terms of tissue distribution, expressed in liver, kidney, placenta, intestine, brain, heart, and colon. Predominantly expressed in liver. Expressed in liver, placenta, and intestine, but much lower relative to isoform 1.

It localises to the endoplasmic reticulum membrane. Its subcellular location is the peroxisome membrane. The protein resides in the cell membrane. It is found in the microsome. The catalysed reaction is a fatty acid(in) = a fatty acid(out). It catalyses the reaction (9Z)-octadecenoate(out) = (9Z)-octadecenoate(in). The enzyme catalyses a long-chain fatty acid + ATP + CoA = a long-chain fatty acyl-CoA + AMP + diphosphate. It carries out the reaction (5Z,8Z,11Z,14Z)-eicosatetraenoate + ATP + CoA = (5Z,8Z,11Z,14Z)-eicosatetraenoyl-CoA + AMP + diphosphate. The catalysed reaction is hexadecanoate + ATP + CoA = hexadecanoyl-CoA + AMP + diphosphate. It catalyses the reaction (9Z)-octadecenoate + ATP + CoA = (9Z)-octadecenoyl-CoA + AMP + diphosphate. The enzyme catalyses 3,7,11,15-tetramethylhexadecanoate + ATP + CoA = phytanoyl-CoA + AMP + diphosphate. It carries out the reaction (9Z,12Z,15Z)-octadecatrienoate + ATP + CoA = (9Z,12Z,15Z)-octadecatrienoyl-CoA + AMP + diphosphate. The catalysed reaction is 2,6,10,14-tetramethylpentadecanoate + ATP + CoA = pristanoyl-CoA + AMP + diphosphate. It catalyses the reaction (E)-hexadec-2-enoate + ATP + CoA = (2E)-hexadecenoyl-CoA + AMP + diphosphate. The enzyme catalyses a very long-chain fatty acid + ATP + CoA = a very long-chain fatty acyl-CoA + AMP + diphosphate. It carries out the reaction tetracosanoate + ATP + CoA = tetracosanoyl-CoA + AMP + diphosphate. The catalysed reaction is (4Z,7Z,10Z,13Z,16Z,19Z)-docosahexaenoate + ATP + CoA = (4Z,7Z,10Z,13Z,16Z,19Z)-docosahexaenoyl-CoA + AMP + diphosphate. It catalyses the reaction (25R)-3alpha,7alpha,12alpha-trihydroxy-5beta-cholestan-26-oate + ATP + CoA = (25R)-3alpha,7alpha,12alpha-trihydroxy-5beta-cholestan-26-oyl-CoA + AMP + diphosphate. In terms of biological role, mediates the import of long-chain fatty acids (LCFA) into the cell by facilitating their transport across cell membranes, playing an important role in hepatic fatty acid uptake. Also functions as an acyl-CoA ligase catalyzing the ATP-dependent formation of fatty acyl-CoA using LCFA and very-long-chain fatty acids (VLCFA) as substrates, which prevents fatty acid efflux from cells and might drive more fatty acid uptake. Plays a pivotal role in regulating available LCFA substrates from exogenous sources in tissues undergoing high levels of beta-oxidation or triglyceride synthesis. Can also activate branched-chain fatty acids such as phytanic acid and pristanic acid. May contribute to the synthesis of sphingosine-1-phosphate. Does not activate C24 bile acids, cholate and chenodeoxycholate. In vitro, activates 3-alpha,7-alpha,12-alpha-trihydroxy-5-beta-cholestanate (THCA), the C27 precursor of cholic acid deriving from the de novo synthesis from cholesterol. However, it is not critical for THCA activation and bile synthesis in vivo. Exhibits both long-chain fatty acids (LCFA) transport activity and acyl CoA synthetase towards very long-chain fatty acids. Shows a preference for generating CoA derivatives of n-3 fatty acids, which are preferentially trafficked into phosphatidylinositol. Its function is as follows. Exhibits long-chain fatty acids (LCFA) transport activity but lacks acyl CoA synthetase towards very long-chain fatty acids. The polypeptide is Long-chain fatty acid transport protein 2 (SLC27A2) (Homo sapiens (Human)).